A 61-amino-acid polypeptide reads, in one-letter code: [Thr6]-bradykinyl-Val,Asp (61 aa).

The signal sequence occupies residues 1–22 (MSFLKKSLFLVLFLGFVSFSIC). The propeptide occupies 23 to 50 (EEEKREDEEEENEREENKESEEKRNQEE). A disordered region spans residues 24–61 (EEKREDEEEENEREENKESEEKRNQEERPPGFTPFRVD). Acidic residues predominate over residues 26–36 (KREDEEEENER). Basic and acidic residues predominate over residues 37–52 (EENKESEEKRNQEERP). Position 53 is a 4-hydroxyproline; in form [Hyp3,Thr6]-bradykinyl-Val,Asp and [Hyp3,Thr6]-bradykinin (proline 53).

Belongs to the frog skin active peptide (FSAP) family. Bradykinin-related peptide subfamily. As to expression, expressed by the skin glands.

It is found in the secreted. In terms of biological role, induces relaxation of rat smooth muscle from tail artery (EC(50)=16.8 nM) and contraction of that from ileum (EC(50)=205 nM), urinary bladder (EC(50)=895 nM) and uterus (EC(50)=60.3 nM). Binds to both bradykinin receptor B1 (BDKRB1) and B2 (BDKRB2). Functionally, [Hyp3,Thr6]-bradykinin: Induces relaxation of rat smooth muscle from tail artery (EC(50)=56.7 nM) and contraction of that from ileum (EC(50)=588 nM), urinary bladder (EC(50)=4.6 uM) and uterus (EC(50)=3.9 nM). Binds to both bradykinin receptor B1 (BDKRB1) and B2 (BDKRB2). In arterial smooth muscle, the effect via BDKRB1 is stronger, in uterus, ileum and urinary bladder the effect via BDKRB2. Induces relaxation of rat smooth muscle from tail artery (EC(50)=10.8 nM) and contraction of that from ileum (EC(50)=645 nM), urinary bladder (EC(50)=1.1 uM) and uterus (EC(50)=1.2 uM). Binds to both bradykinin receptor B1 (BDKRB1) and B2 (BDKRB2). Apart from uterus smooth muscle, the effect via BDKRB2 is stronger. Its function is as follows. [Hyp3,Thr6]-bradykinyl-Val,Asp: Induces relaxation of rat smooth muscle from tail artery (EC(50)=3.5 nM) and contraction of that from ileum (EC(50)=223 nM), urinary bladder (EC(50)=1.5 uM) and uterus (EC(50)=356 nM). Binds to both bradykinin receptor B1 (BDKRB1) and B2 (BDKRB2); the effects via BDKRB2 are stronger. The chain is [Thr6]-bradykinyl-Val,Asp from Agalychnis dacnicolor (Giant Mexican leaf frog).